Reading from the N-terminus, the 445-residue chain is Phosphoglucosamine mutase (445 aa).

Serine 99 serves as the catalytic Phosphoserine intermediate. Residues serine 99, aspartate 242, aspartate 244, and aspartate 246 each coordinate Mg(2+). A Phosphoserine modification is found at serine 99.

This sequence belongs to the phosphohexose mutase family. Mg(2+) is required as a cofactor. Activated by phosphorylation.

The catalysed reaction is alpha-D-glucosamine 1-phosphate = D-glucosamine 6-phosphate. Catalyzes the conversion of glucosamine-6-phosphate to glucosamine-1-phosphate. In Helicobacter pylori (strain P12), this protein is Phosphoglucosamine mutase.